We begin with the raw amino-acid sequence, 263 residues long: HTH-type transcriptional repressor NanR (263 aa).

Residues 1–22 (MGLMNAFDSQTEDSSPAIGRNL) form a disordered region. In terms of domain architecture, HTH gntR-type spans 30-98 (KKLSEMVEEE…NGERARVSRP (69 aa)). Positions 58-77 (ERELMAFFNVGRPSVREALA) form a DNA-binding region, H-T-H motif.

The protein belongs to the NanR family.

Its function is as follows. Transcriptional repressor that controls expression of the genes required for the catabolism of sialic acids. This Shigella boydii serotype 4 (strain Sb227) protein is HTH-type transcriptional repressor NanR.